Consider the following 468-residue polypeptide: Argininosuccinate lyase (468 aa).

Belongs to the lyase 1 family. Argininosuccinate lyase subfamily.

The protein localises to the cytoplasm. The catalysed reaction is 2-(N(omega)-L-arginino)succinate = fumarate + L-arginine. The protein operates within amino-acid biosynthesis; L-arginine biosynthesis; L-arginine from L-ornithine and carbamoyl phosphate: step 3/3. This chain is Argininosuccinate lyase, found in Paraburkholderia phytofirmans (strain DSM 17436 / LMG 22146 / PsJN) (Burkholderia phytofirmans).